The following is a 639-amino-acid chain: Chaperone protein DnaK (639 aa).

Residue Thr-198 is modified to Phosphothreonine; by autocatalysis. The tract at residues 605 to 624 (SQAQGGAETNAGKQANAAAD) is disordered.

The protein belongs to the heat shock protein 70 family.

Functionally, acts as a chaperone. The chain is Chaperone protein DnaK from Shewanella putrefaciens (strain CN-32 / ATCC BAA-453).